The sequence spans 111 residues: High mobility group protein Z (111 aa).

The HMG box DNA-binding region spans 6–72; the sequence is PKRPLSAYML…EYNKAVKEYE (67 aa). Ser-11 is modified (phosphoserine). Residues 72–111 form a disordered region; that stretch reads EANGGTDSGAPKKRKKAAAKPAKKAKKKESSEEEEEDESE. Residues 82-98 are compositionally biased toward basic residues; the sequence is PKKRKKAAAKPAKKAKK. Positions 102 to 111 are enriched in acidic residues; that stretch reads SEEEEEDESE.

The protein belongs to the HMGB family.

The protein resides in the nucleus. It localises to the chromosome. This is High mobility group protein Z (HmgZ) from Drosophila melanogaster (Fruit fly).